Consider the following 151-residue polypeptide: UPF0735 ACT domain-containing protein SERP1207 (151 aa).

Positions 74 to 149 (TLILYVNDIV…HVTKVDLISM (76 aa)) constitute an ACT domain.

The protein belongs to the UPF0735 family.

The sequence is that of UPF0735 ACT domain-containing protein SERP1207 from Staphylococcus epidermidis (strain ATCC 35984 / DSM 28319 / BCRC 17069 / CCUG 31568 / BM 3577 / RP62A).